The following is a 260-amino-acid chain: Myb transcription factor 42 (260 aa).

HTH myb-type domains are found at residues 9-61 (KAHT…INYL) and 62-116 (RPDL…RRKL). 2 consecutive DNA-binding regions (H-T-H motif) follow at residues 37-61 (WRSL…INYL) and 89-112 (WSLI…NTHI).

As to expression, mainly expressed in the aerial parts and, to a lower extent, in roots.

Its subcellular location is the nucleus. Transcription factor that negatively regulates the expression of caffeic acid O-methyl-transferase genes (COMTs) and of other genes involved in the biosynthesis of lignin, thus preventing lignification. In Zea mays (Maize), this protein is Myb transcription factor 42.